The chain runs to 85 residues: NAD(P)H-quinone oxidoreductase subunit O (85 aa).

The protein belongs to the complex I NdhO subunit family. As to quaternary structure, NDH-1 can be composed of about 15 different subunits; different subcomplexes with different compositions have been identified which probably have different functions.

The protein localises to the cellular thylakoid membrane. It catalyses the reaction a plastoquinone + NADH + (n+1) H(+)(in) = a plastoquinol + NAD(+) + n H(+)(out). The catalysed reaction is a plastoquinone + NADPH + (n+1) H(+)(in) = a plastoquinol + NADP(+) + n H(+)(out). Functionally, NDH-1 shuttles electrons from an unknown electron donor, via FMN and iron-sulfur (Fe-S) centers, to quinones in the respiratory and/or the photosynthetic chain. The immediate electron acceptor for the enzyme in this species is believed to be plastoquinone. Couples the redox reaction to proton translocation, and thus conserves the redox energy in a proton gradient. Cyanobacterial NDH-1 also plays a role in inorganic carbon-concentration. The chain is NAD(P)H-quinone oxidoreductase subunit O from Synechococcus sp. (strain WH7803).